The chain runs to 113 residues: Ribosome-binding factor A (113 aa).

The protein belongs to the RbfA family. As to quaternary structure, monomer. Binds 30S ribosomal subunits, but not 50S ribosomal subunits or 70S ribosomes.

It localises to the cytoplasm. Its function is as follows. One of several proteins that assist in the late maturation steps of the functional core of the 30S ribosomal subunit. Associates with free 30S ribosomal subunits (but not with 30S subunits that are part of 70S ribosomes or polysomes). Required for efficient processing of 16S rRNA. May interact with the 5'-terminal helix region of 16S rRNA. The polypeptide is Ribosome-binding factor A (Lactococcus lactis subsp. cremoris (Streptococcus cremoris)).